The primary structure comprises 223 residues: Deoxyribose-phosphate aldolase 2 (223 aa).

The active-site Proton donor/acceptor is aspartate 92. The active-site Schiff-base intermediate with acetaldehyde is lysine 154. The active-site Proton donor/acceptor is the lysine 183.

Belongs to the DeoC/FbaB aldolase family. DeoC type 1 subfamily.

The protein resides in the cytoplasm. It carries out the reaction 2-deoxy-D-ribose 5-phosphate = D-glyceraldehyde 3-phosphate + acetaldehyde. The protein operates within carbohydrate degradation; 2-deoxy-D-ribose 1-phosphate degradation; D-glyceraldehyde 3-phosphate and acetaldehyde from 2-deoxy-alpha-D-ribose 1-phosphate: step 2/2. In terms of biological role, catalyzes a reversible aldol reaction between acetaldehyde and D-glyceraldehyde 3-phosphate to generate 2-deoxy-D-ribose 5-phosphate. The protein is Deoxyribose-phosphate aldolase 2 of Oceanobacillus iheyensis (strain DSM 14371 / CIP 107618 / JCM 11309 / KCTC 3954 / HTE831).